Here is a 433-residue protein sequence, read N- to C-terminus: Phosphoglycerate kinase, chloroplastic (433 aa).

The N-terminal 28 residues, 1–28 (GASFSLHVLSKINSYKSQSTKPIRGVAS), are a transit peptide targeting the chloroplast. (2R)-3-phosphoglycerate-binding residues include A51, D52, N54, R68, S90, H91, G93, R94, R149, H181, and R182. G227 lines the ADP pocket. CDP is bound at residue G227. Residues K229 and K233 each coordinate AMP. K233 serves as a coordination point for ATP. Residue G251 coordinates ADP. G251 lines the CDP pocket. AMP-binding residues include G252 and G324. G252 and G324 together coordinate ATP. CDP-binding residues include G349 and F354. F354 contacts ADP. Residue E355 coordinates AMP. ATP is bound by residues E355, D386, and S387. D386 serves as a coordination point for Mg(2+).

Belongs to the phosphoglycerate kinase family. As to quaternary structure, monomer. Requires Mg(2+) as cofactor.

Its subcellular location is the plastid. It localises to the chloroplast. It carries out the reaction (2R)-3-phosphoglycerate + ATP = (2R)-3-phospho-glyceroyl phosphate + ADP. It participates in carbohydrate biosynthesis; Calvin cycle. This chain is Phosphoglycerate kinase, chloroplastic, found in Spinacia oleracea (Spinach).